The sequence spans 215 residues: MMKMCRYALITALAIFLAGCAGLREQPAPVEEAKPQPQQPAQPQPTVPTVPAVPSVPAQPGPIEHQDQQSGQPAPRVRHYDWNGAVQPLVGQMLQASGVNAGSILLVDSVNNRTNGSLNAGEATTALRSALAGNGKFTLVSAQQLAVAKQQLGLSPQDSLGSRSKAMGIARNVGAQYVLYSNATGNVNAPELKMQLMLVQTGEIIWSGKGAVQQQ.

Residues 1–19 (MMKMCRYALITALAIFLAG) form the signal peptide. The N-palmitoyl cysteine moiety is linked to residue Cys-20. A lipid anchor (S-diacylglycerol cysteine) is attached at Cys-20. Residues 28-78 (APVEEAKPQPQQPAQPQPTVPTVPAVPSVPAQPGPIEHQDQQSGQPAPRVR) form a disordered region. The segment covering 37-48 (PQQPAQPQPTVP) has biased composition (pro residues). The segment covering 49 to 58 (TVPAVPSVPA) has biased composition (low complexity).

It belongs to the LpoB family. As to quaternary structure, interacts with PBP1b.

Its subcellular location is the cell outer membrane. In terms of biological role, regulator of peptidoglycan synthesis that is essential for the function of penicillin-binding protein 1B (PBP1b). This is Penicillin-binding protein activator LpoB from Klebsiella pneumoniae subsp. pneumoniae (strain ATCC 700721 / MGH 78578).